The sequence spans 245 residues: Ubiquinone/menaquinone biosynthesis C-methyltransferase UbiE (245 aa).

S-adenosyl-L-methionine-binding positions include T71, D92, and 118 to 119 (DA).

The protein belongs to the class I-like SAM-binding methyltransferase superfamily. MenG/UbiE family.

It carries out the reaction a 2-demethylmenaquinol + S-adenosyl-L-methionine = a menaquinol + S-adenosyl-L-homocysteine + H(+). The catalysed reaction is a 2-methoxy-6-(all-trans-polyprenyl)benzene-1,4-diol + S-adenosyl-L-methionine = a 5-methoxy-2-methyl-3-(all-trans-polyprenyl)benzene-1,4-diol + S-adenosyl-L-homocysteine + H(+). The protein operates within quinol/quinone metabolism; menaquinone biosynthesis; menaquinol from 1,4-dihydroxy-2-naphthoate: step 2/2. It functions in the pathway cofactor biosynthesis; ubiquinone biosynthesis. Its function is as follows. Methyltransferase required for the conversion of demethylmenaquinol (DMKH2) to menaquinol (MKH2) and the conversion of 2-polyprenyl-6-methoxy-1,4-benzoquinol (DDMQH2) to 2-polyprenyl-3-methyl-6-methoxy-1,4-benzoquinol (DMQH2). This is Ubiquinone/menaquinone biosynthesis C-methyltransferase UbiE from Neisseria meningitidis serogroup C (strain 053442).